Reading from the N-terminus, the 631-residue chain is 1-deoxy-D-xylulose-5-phosphate synthase (631 aa).

Thiamine diphosphate contacts are provided by residues His78 and 119–121; that span reads AHS. Position 150 (Asp150) interacts with Mg(2+). Thiamine diphosphate is bound by residues 151-152, Asn179, Tyr286, and Glu368; that span reads GA. Asn179 provides a ligand contact to Mg(2+).

This sequence belongs to the transketolase family. DXPS subfamily. Homodimer. Mg(2+) serves as cofactor. Requires thiamine diphosphate as cofactor.

The catalysed reaction is D-glyceraldehyde 3-phosphate + pyruvate + H(+) = 1-deoxy-D-xylulose 5-phosphate + CO2. The protein operates within metabolic intermediate biosynthesis; 1-deoxy-D-xylulose 5-phosphate biosynthesis; 1-deoxy-D-xylulose 5-phosphate from D-glyceraldehyde 3-phosphate and pyruvate: step 1/1. Its function is as follows. Catalyzes the acyloin condensation reaction between C atoms 2 and 3 of pyruvate and glyceraldehyde 3-phosphate to yield 1-deoxy-D-xylulose-5-phosphate (DXP). This is 1-deoxy-D-xylulose-5-phosphate synthase from Verminephrobacter eiseniae (strain EF01-2).